We begin with the raw amino-acid sequence, 206 residues long: LexA repressor (206 aa).

Residues 28–48 (RAEIARRLGFKSANAAEEHLK) constitute a DNA-binding region (H-T-H motif). Active-site for autocatalytic cleavage activity residues include S123 and K160.

It belongs to the peptidase S24 family. As to quaternary structure, homodimer.

It carries out the reaction Hydrolysis of Ala-|-Gly bond in repressor LexA.. In terms of biological role, represses a number of genes involved in the response to DNA damage (SOS response), including recA and lexA. In the presence of single-stranded DNA, RecA interacts with LexA causing an autocatalytic cleavage which disrupts the DNA-binding part of LexA, leading to derepression of the SOS regulon and eventually DNA repair. This is LexA repressor from Shewanella piezotolerans (strain WP3 / JCM 13877).